Here is a 428-residue protein sequence, read N- to C-terminus: Histidine--tRNA ligase (428 aa).

It belongs to the class-II aminoacyl-tRNA synthetase family. In terms of assembly, homodimer.

The protein resides in the cytoplasm. The enzyme catalyses tRNA(His) + L-histidine + ATP = L-histidyl-tRNA(His) + AMP + diphosphate + H(+). In Mesomycoplasma hyopneumoniae (strain J / ATCC 25934 / NCTC 10110) (Mycoplasma hyopneumoniae), this protein is Histidine--tRNA ligase.